Here is a 309-residue protein sequence, read N- to C-terminus: MNRLQVELPGLSLKNPIIPASGCFGFGREYAQFYDLSVLGSIMIKATTEQPRYGNPTPRVAETPGGMLNAIGLQNPGLEKVMNSELPFLEQFDLPIIANVAGSQAEDYVAVAKAISKAPNVHALELNISCPNVKTGGIAFGTNPEIAADLTKRVKEVSEVPVYVKLSPNVANIVEIAKAIENAGADGLTMINTLLGMRLDLKTAKPILANRTGGLSGPAIKPVALRMVHEVSQAVNIPIIGMGGIETAEDVIEFFYAGASAVAVGTANFIDPFVCPTIIEELPALLDELGFDHISECQGRSWKQTCHSR.

FMN is bound by residues Ser21 and 45–46 (KA). Substrate is bound by residues Lys45 and 69–73 (NAIGL). FMN-binding residues include Asn99 and Asn127. Asn127 lines the substrate pocket. Residue Cys130 is the Nucleophile of the active site. Residues Lys165 and Ile191 each coordinate FMN. 192 to 193 (NT) provides a ligand contact to substrate. Residues Gly217, 243–244 (GG), and 265–266 (GT) each bind FMN.

Belongs to the dihydroorotate dehydrogenase family. Type 1 subfamily. As to quaternary structure, heterotetramer of 2 PyrK and 2 PyrD type B subunits. FMN serves as cofactor.

It is found in the cytoplasm. The catalysed reaction is (S)-dihydroorotate + NAD(+) = orotate + NADH + H(+). It participates in pyrimidine metabolism; UMP biosynthesis via de novo pathway; orotate from (S)-dihydroorotate (NAD(+) route): step 1/1. Functionally, catalyzes the conversion of dihydroorotate to orotate with NAD(+) as electron acceptor. This Bacillus mycoides (strain KBAB4) (Bacillus weihenstephanensis) protein is Dihydroorotate dehydrogenase B (NAD(+)), catalytic subunit (pyrD).